The chain runs to 799 residues: Protein-lysine N-methyltransferase SMYD4 (799 aa).

112 to 114 (RSA) contributes to the S-adenosyl-L-methionine binding site. Positions 233-570 (LSVSLCTHPL…KGQEILHCYG (338 aa)) constitute an SET domain. Residues cysteine 296, cysteine 299, cysteine 309, cysteine 312, cysteine 318, cysteine 322, histidine 331, and cysteine 335 each contribute to the Zn(2+) site. Residues 296 to 335 (CHRCLKHTLATVPCGSCSYAKYCSQECMQQAWDLYHSTEC) form an MYND-type zinc finger. S-adenosyl-L-methionine-binding positions include 535–536 (NH), tyrosine 569, and phenylalanine 591.

Belongs to the class V-like SAM-binding methyltransferase superfamily. Interacts (via MYND-type zinc finger) with HDAC1.

The protein resides in the nucleus. It localises to the cytoplasm. It carries out the reaction L-lysyl-[protein] + S-adenosyl-L-methionine = N(6)-methyl-L-lysyl-[protein] + S-adenosyl-L-homocysteine + H(+). Functionally, protein-lysine N-methyltransferase. Monomethylates PRMT5, modulating its transcriptional activity. May also act as a histone methyltransferase. Plays a critical role in cardiac development. Acts as a key epigenetic regulator of gene expression during cardiac development via its dual activities as a methyltransferase and negative regulator of HDAC1. This is Protein-lysine N-methyltransferase SMYD4 (Smyd4) from Mus musculus (Mouse).